The following is a 144-amino-acid chain: Putative pre-16S rRNA nuclease (144 aa).

It belongs to the YqgF nuclease family.

It localises to the cytoplasm. Its function is as follows. Could be a nuclease involved in processing of the 5'-end of pre-16S rRNA. The sequence is that of Putative pre-16S rRNA nuclease from Pseudomonas paraeruginosa (strain DSM 24068 / PA7) (Pseudomonas aeruginosa (strain PA7)).